Here is a 102-residue protein sequence, read N- to C-terminus: Small ribosomal subunit protein uS10 (102 aa).

The disordered stretch occupies residues 37–61 (PIPLPTKSLKITTRKSTDGEGSSSF).

This sequence belongs to the universal ribosomal protein uS10 family. Part of the 30S ribosomal subunit.

In terms of biological role, involved in the binding of tRNA to the ribosomes. This chain is Small ribosomal subunit protein uS10, found in Methanococcus vannielii (strain ATCC 35089 / DSM 1224 / JCM 13029 / OCM 148 / SB).